The following is a 604-amino-acid chain: Elongation factor 4 (604 aa).

The tr-type G domain occupies 10–191 (KNIRNFSIIA…KIITTIPAPS (182 aa)). GTP-binding positions include 22–27 (DHGKST) and 138–141 (NKID).

Belongs to the TRAFAC class translation factor GTPase superfamily. Classic translation factor GTPase family. LepA subfamily.

It localises to the cell inner membrane. The enzyme catalyses GTP + H2O = GDP + phosphate + H(+). In terms of biological role, required for accurate and efficient protein synthesis under certain stress conditions. May act as a fidelity factor of the translation reaction, by catalyzing a one-codon backward translocation of tRNAs on improperly translocated ribosomes. Back-translocation proceeds from a post-translocation (POST) complex to a pre-translocation (PRE) complex, thus giving elongation factor G a second chance to translocate the tRNAs correctly. Binds to ribosomes in a GTP-dependent manner. The polypeptide is Elongation factor 4 (Helicobacter pylori (strain P12)).